The primary structure comprises 149 residues: Ribonuclease pancreatic (149 aa).

Residues 1 to 25 (MGLEKSLILFPLFVLLLGWVQPSLG) form the signal peptide. The disordered stretch occupies residues 30-49 (AQKFERQHMDSSGSSNNSPT). Substrate-binding residues include lysine 32 and arginine 35. Residue histidine 37 is the Proton acceptor of the active site. Over residues 39–49 (DSSGSSNNSPT) the composition is skewed to polar residues. 4 disulfide bridges follow: cysteine 51/cysteine 109, cysteine 65/cysteine 120, cysteine 83/cysteine 135, and cysteine 90/cysteine 97. 66–70 (KPVNT) serves as a coordination point for substrate. N-linked (GlcNAc...) asparagine glycosylation is present at asparagine 87. Lysine 91 lines the substrate pocket. Histidine 144 functions as the Proton donor in the catalytic mechanism.

Belongs to the pancreatic ribonuclease family. In terms of assembly, monomer. Interacts with and forms tight 1:1 complexes with RNH1. Dimerization of two such complexes may occur. Interaction with RNH1 inhibits this protein. In terms of tissue distribution, pancreas.

It is found in the secreted. The catalysed reaction is an [RNA] containing cytidine + H2O = an [RNA]-3'-cytidine-3'-phosphate + a 5'-hydroxy-ribonucleotide-3'-[RNA].. It catalyses the reaction an [RNA] containing uridine + H2O = an [RNA]-3'-uridine-3'-phosphate + a 5'-hydroxy-ribonucleotide-3'-[RNA].. Endonuclease that catalyzes the cleavage of RNA on the 3' side of pyrimidine nucleotides. Acts on single-stranded and double-stranded RNA. In Mus pahari (Gairdner's shrew-mouse), this protein is Ribonuclease pancreatic (Rnase1).